Here is an 88-residue protein sequence, read N- to C-terminus: Small ribosomal subunit protein bS20 (88 aa).

The tract at residues 1–27 is disordered; the sequence is MANSKSAKKRALQSEKRRQHNASRRSM.

This sequence belongs to the bacterial ribosomal protein bS20 family.

Binds directly to 16S ribosomal RNA. The sequence is that of Small ribosomal subunit protein bS20 from Shewanella oneidensis (strain ATCC 700550 / JCM 31522 / CIP 106686 / LMG 19005 / NCIMB 14063 / MR-1).